Reading from the N-terminus, the 678-residue chain is Penicillin-binding protein activator LpoA (678 aa).

A signal peptide spans 1-26; it reads MVPSTFSRLKAARCLPVVLAALIFAG. C27 carries the N-palmitoyl cysteine lipid modification. Residue C27 is the site of S-diacylglycerol cysteine attachment. 2 disordered regions span residues 302–340 and 496–528; these read DVAE…PVSA and ALTG…DDQF. Composition is skewed to low complexity over residues 330–340 and 513–528; these read QPAAQPVPVSA and TTNN…DDQF.

The protein belongs to the LpoA family. In terms of assembly, interacts with PBP1a.

It is found in the cell outer membrane. Regulator of peptidoglycan synthesis that is essential for the function of penicillin-binding protein 1A (PBP1a). The polypeptide is Penicillin-binding protein activator LpoA (Shigella sonnei (strain Ss046)).